The primary structure comprises 233 residues: Orotidine 5'-phosphate decarboxylase (233 aa).

Substrate contacts are provided by residues aspartate 13, lysine 35, 62-71 (DLKFHDIPNT), threonine 122, arginine 182, glutamine 191, glycine 211, and arginine 212. The Proton donor role is filled by lysine 64.

This sequence belongs to the OMP decarboxylase family. Type 1 subfamily. As to quaternary structure, homodimer.

It catalyses the reaction orotidine 5'-phosphate + H(+) = UMP + CO2. The protein operates within pyrimidine metabolism; UMP biosynthesis via de novo pathway; UMP from orotate: step 2/2. In terms of biological role, catalyzes the decarboxylation of orotidine 5'-monophosphate (OMP) to uridine 5'-monophosphate (UMP). The chain is Orotidine 5'-phosphate decarboxylase from Pseudomonas fluorescens (strain ATCC BAA-477 / NRRL B-23932 / Pf-5).